The chain runs to 256 residues: UPF0246 protein HCH_04801 (256 aa).

This sequence belongs to the UPF0246 family.

The protein is UPF0246 protein HCH_04801 of Hahella chejuensis (strain KCTC 2396).